A 321-amino-acid polypeptide reads, in one-letter code: Prephenate dehydratase (321 aa).

The region spanning 3 to 189 is the Prephenate dehydratase domain; that stretch reads RIAYLGPEGT…ARTRFVLVGR (187 aa). The region spanning 203-280 is the ACT domain; sequence SAVLRIDNQP…ADVRYLGSWP (78 aa).

Homodimer.

It catalyses the reaction prephenate + H(+) = 3-phenylpyruvate + CO2 + H2O. It participates in amino-acid biosynthesis; L-phenylalanine biosynthesis; phenylpyruvate from prephenate: step 1/1. The protein is Prephenate dehydratase (pheA) of Mycobacterium bovis (strain ATCC BAA-935 / AF2122/97).